Consider the following 131-residue polypeptide: Methylglyoxal synthase (131 aa).

The 131-residue stretch at 1–131 (MKIALIAHDK…GDLDYRKLRK (131 aa)) folds into the MGS-like domain. Substrate contacts are provided by residues histidine 8, lysine 12, 34 to 37 (TGTT), and 54 to 55 (SG). Residue aspartate 60 is the Proton donor/acceptor of the active site. Histidine 87 serves as a coordination point for substrate.

It belongs to the methylglyoxal synthase family.

The catalysed reaction is dihydroxyacetone phosphate = methylglyoxal + phosphate. Its function is as follows. Catalyzes the formation of methylglyoxal from dihydroxyacetone phosphate. The chain is Methylglyoxal synthase from Bacillus anthracis (strain A0248).